A 591-amino-acid chain; its full sequence is Heterogeneous nuclear ribonucleoprotein L-like (591 aa).

The interval 1 to 120 (MSSSSSSSPK…STEGGGSHHK (120 aa)) is disordered. Over residues 20–31 (FESQAKRLKTEE) the composition is skewed to basic and acidic residues. K28 is covalently cross-linked (Glycyl lysine isopeptide (Lys-Gly) (interchain with G-Cter in SUMO2)). S37 is subject to Phosphoserine. Position 48 is a phosphothreonine (T48). Residues 57 to 73 (SGGGDGGDGDGGSGGGG) show a composition bias toward gly residues. Over residues 74 to 91 (DGEEGEGGEEGDEGDGDE) the composition is skewed to acidic residues. A compositionally biased stretch (gly residues) spans 92–105 (GGSGGDEGGSGGGP). 3 positions are modified to phosphoserine: S107, S117, and S124. 3 RRM domains span residues 125-199 (PVVH…YSTS), 215-293 (NKVL…YARP), and 384-458 (SVVM…VSKQ). K540 participates in a covalent cross-link: Glycyl lysine isopeptide (Lys-Gly) (interchain with G-Cter in SUMO2).

As to quaternary structure, interacts with HNRNPL.

RNA-binding protein that functions as a regulator of alternative splicing for multiple target mRNAs, including PTPRC/CD45 and STAT5A. Required for alternative splicing of PTPRC. The sequence is that of Heterogeneous nuclear ribonucleoprotein L-like (Hnrnpll) from Mus musculus (Mouse).